The sequence spans 966 residues: Dynamin-like GTPase OPA1, mitochondrial (966 aa).

The transit peptide at 1–86 (MLRAGSVVTC…GGHGYQQHRT (86 aa)) directs the protein to the mitochondrion. The Mitochondrial matrix segment spans residues 87-95 (FWVARLAAR). Residues 96–112 (LLKLRYILLGSAVGGGY) traverse the membrane as a helical segment. Residues 113-776 (TAKKTYDEWK…SVIADMVGPD (664 aa)) lie on the Mitochondrial intermembrane side of the membrane. The tract at residues 189-217 (ESALRAPDVPPASAAMADSGDKQFKKSSD) is disordered. Over residues 207-217 (SGDKQFKKSSD) the composition is skewed to basic and acidic residues. Positions 213–259 (KKSSDKEKVDQLQEELLRTQLKYQRMLERLEKENKELRKVVLQKDDK) form a coiled coil. The Dynamin-type G domain maps to 291 to 567 (QDHLPRVVVV…FWKMVRESVE (277 aa)). Positions 301 to 308 (GDQSAGKT) are G1 motif. GTP is bound by residues Ser304, Gly306, Lys307, Thr308, Ser309, and Gly323. Thr308 contributes to the Mg(2+) binding site. A G2 motif region spans residues 327–330 (MMTR). Mg(2+) contacts are provided by Thr329 and Asp404. Positions 404-407 (DLPG) are G3 motif. The interval 473–476 (TKVD) is G4 motif. GTP contacts are provided by Lys474, Asp476, and Thr509. Residues 507–510 (VVTG) are G5 motif. Stalk region stretches follow at residues 595 to 842 (DRNE…IKDT) and 880 to 934 (CNDV…VQLI). Positions 742 to 862 (TDKPQWDAAI…QKALLHCNLC (121 aa)) are paddle region. An intramembrane segment occupies 777–787 (WKQRWMSWKNR). Residues 788–966 (TPEQHTRNET…AFIEALHKEK (179 aa)) lie on the Mitochondrial intermembrane side of the membrane. Residues Cys862 and Cys880 are joined by a disulfide bond. The stretch at 901-966 (RQQLTNTEVR…AFIEALHKEK (66 aa)) forms a coiled coil.

This sequence belongs to the TRAFAC class dynamin-like GTPase superfamily. Dynamin/Fzo/YdjA family. In terms of assembly, oligomeric complex consisting of membrane-bound and soluble forms of OPA1. Post-translationally, cleaved by OMA1 or YME1L downstream of the transmembrane region in response to different signals to generate soluble forms. Cleaved by OMA1 at position S1 following stress conditions, generating the short soluble form (Dynamin-like GTPase OPA1, short form; S-OPA1).

It localises to the mitochondrion inner membrane. The protein resides in the mitochondrion intermembrane space. The catalysed reaction is GTP + H2O = GDP + phosphate + H(+). In terms of biological role, dynamin-related GTPase that is essential for normal mitochondrial morphology by mediating fusion of the mitochondrial inner membranes, regulating cristae morphology and maintaining respiratory chain function. Exists in two forms: the transmembrane, long form (Dynamin-like GTPase OPA1, long form; L-OPA1), which is tethered to the inner mitochondrial membrane, and the short soluble form (Dynamin-like GTPase OPA1, short form; S-OPA1), which results from proteolytic cleavage and localizes in the intermembrane space. Both forms (L-OPA1 and S-OPA1) cooperate to catalyze the fusion of the mitochondrial inner membrane. The equilibrium between L-OPA1 and S-OPA1 is essential: excess levels of S-OPA1, produced by cleavage by OMA1 following loss of mitochondrial membrane potential, lead to an impaired equilibrium between L-OPA1 and S-OPA1, inhibiting mitochondrial fusion. The balance between L-OPA1 and S-OPA1 also influences cristae shape and morphology. Its role in mitochondrial morphology is required for mitochondrial genome maintenance. Its function is as follows. Constitutes the transmembrane long form (L-OPA1) that plays a central role in mitochondrial inner membrane fusion and cristae morphology. L-OPA1 and the soluble short form (S-OPA1) form higher-order helical assemblies that coordinate the fusion of mitochondrial inner membranes. Inner membrane-anchored L-OPA1 molecules initiate membrane remodeling by recruiting soluble S-OPA1 to rapidly polymerize into a flexible cylindrical scaffold encaging the mitochondrial inner membrane. Once at the membrane surface, the formation of S-OPA1 helices induce bilayer curvature. OPA1 dimerization through the paddle region, which inserts into cardiolipin-containing membrane, promotes GTP hydrolysis and the helical assembly of a flexible OPA1 lattice on the membrane, which drives membrane curvature and mitochondrial fusion. Plays a role in the maintenance and remodeling of mitochondrial cristae, some invaginations of the mitochondrial inner membrane that provide an increase in the surface area. Probably acts by forming helical filaments at the inside of inner membrane tubes with the shape and dimensions of crista junctions. Functionally, constitutes the soluble short form (S-OPA1) generated by cleavage by OMA1, which plays a central role in mitochondrial inner membrane fusion and cristae morphology. The transmembrane long form (L-OPA1) and the S-OPA1 form higher-order helical assemblies that coordinate the fusion of mitochondrial inner membranes. Inner membrane-anchored L-OPA1 molecules initiate membrane remodeling by recruiting soluble S-OPA1 to rapidly polymerize into a flexible cylindrical scaffold encaging the mitochondrial inner membrane. Once at the membrane surface, the formation of S-OPA1 helices induce bilayer curvature. OPA1 dimerization through the paddle region, which inserts into cardiolipin-containing membrane, promotes GTP hydrolysis and the helical assembly of a flexible OPA1 lattice on the membrane, which drives membrane curvature and mitochondrial fusion. Excess levels of S-OPA1 produced by cleavage by OMA1 following stress conditions that induce loss of mitochondrial membrane potential, lead to an impaired equilibrium between L-OPA1 and S-OPA1, thereby inhibiting mitochondrial fusion. Plays a role in the maintenance and remodeling of mitochondrial cristae, some invaginations of the mitochondrial inner membrane that provide an increase in the surface area. Probably acts by forming helical filaments at the inside of inner membrane tubes with the shape and dimensions of crista junctions. The protein is Dynamin-like GTPase OPA1, mitochondrial of Danio rerio (Zebrafish).